A 190-amino-acid chain; its full sequence is GATA transcription factor 17 (190 aa).

A compositionally biased stretch (basic and acidic residues) spans 1 to 14 (MSEGSEDTKTKLDS). Disordered regions lie at residues 1-42 (MSEG…DTKR) and 77-101 (RQAALGMRSEEKKKNRKSNCNNDLN). The GATA-type zinc finger occupies 38-92 (GDTKRTCVDCGTIRTPLWRGGPAGPKSLCNACGIKSRKKRQAALGMRSEEKKKNR).

Belongs to the type IV zinc-finger family. Class B subfamily.

The protein resides in the nucleus. Its function is as follows. Transcriptional regulator that specifically binds 5'-GATA-3' or 5'-GAT-3' motifs within gene promoters. The chain is GATA transcription factor 17 (GATA17) from Arabidopsis thaliana (Mouse-ear cress).